A 384-amino-acid polypeptide reads, in one-letter code: F-box only protein 5 (384 aa).

Residues 25-67 form a disordered region; that stretch reads EVKGHKVSPRKTGALSLRSPAATNVSTPLESRSKGPHNKENYQ. The span at 45 to 54 shows a compositional bias: polar residues; sequence AATNVSTPLE. Basic and acidic residues predominate over residues 55 to 67; it reads SRSKGPHNKENYQ. One can recognise an F-box domain in the interval 187 to 234; sequence CKLMRKDMRHILARILGLLGDCDLISCTKVSRTWRKIICQDQLALQRW. A ZBR-type zinc finger spans residues 311–359; it reads SLRRCSRCSSPARFDAVMQRAVCTRISCAFEFCTLCQSAFHDSTPCRNT. Positions 315, 318, 333, 338, 343, 346, 351, and 356 each coordinate Zn(2+).

As to quaternary structure, part of a SCF (SKP1-cullin-F-box) protein ligase complex.

The protein resides in the nucleus. Its subcellular location is the cytoplasm. It participates in protein modification; protein ubiquitination. In terms of biological role, during embryonic development, regulates the integrity of the genome and therefore the cell cycle progression by preventing rereplication through an APC-Cdh1-dependent mechanism. The sequence is that of F-box only protein 5 from Danio rerio (Zebrafish).